We begin with the raw amino-acid sequence, 177 residues long: ATP-dependent protease subunit HslV (177 aa).

Thr2 is an active-site residue. Na(+) contacts are provided by Gly157, Cys160, and Thr163.

This sequence belongs to the peptidase T1B family. HslV subfamily. As to quaternary structure, a double ring-shaped homohexamer of HslV is capped on each side by a ring-shaped HslU homohexamer. The assembly of the HslU/HslV complex is dependent on binding of ATP.

The protein resides in the cytoplasm. It catalyses the reaction ATP-dependent cleavage of peptide bonds with broad specificity.. Its activity is regulated as follows. Allosterically activated by HslU binding. Functionally, protease subunit of a proteasome-like degradation complex believed to be a general protein degrading machinery. This is ATP-dependent protease subunit HslV from Aeromonas hydrophila subsp. hydrophila (strain ATCC 7966 / DSM 30187 / BCRC 13018 / CCUG 14551 / JCM 1027 / KCTC 2358 / NCIMB 9240 / NCTC 8049).